Reading from the N-terminus, the 403-residue chain is MKNTNDIAVLIVDDSALMRKVIGKVIEGAPGLSIAGKAMNGRFALDMLERVQPDVILLDLEMPHMNGLQFLEQRKRLRIDIPVIILSSIAKEGARVTMQCLELGASDFVTKPFGSESAHLRTVSRKIVDYVTAYGRRYKLLRRTRRCLAMDTPVERPAGEEDLNCLDTQERASLPSVCARAPARDRASYTITPTEGARQTRIVPLRESGALQIIAIGVSTGGPSALRHIFAQLDADLPQPVVVVQHMPAGFTREFAYSLNQVCALEVKEAQEGDLVRRGRVLIAPGDRHLTVERRSLATVAHINSDEPENGHRPSVDVLFESVARHFENRALGILMTGMGRDGAAQLARLYTEGSRTIAQDADSCIVYGMPRVACELGAVGEQVSLDDMAATINRYGKVFASS.

Residues 8 to 126 (AVLIVDDSAL…SAHLRTVSRK (119 aa)) enclose the Response regulatory domain. Aspartate 59 carries the post-translational modification 4-aspartylphosphate. The CheB-type methylesterase domain occupies 204–393 (PLRESGALQI…VSLDDMAATI (190 aa)). Catalysis depends on residues serine 219, histidine 246, and aspartate 342.

Belongs to the CheB family. Phosphorylated by CheA. Phosphorylation of the N-terminal regulatory domain activates the methylesterase activity.

It localises to the cytoplasm. It carries out the reaction [protein]-L-glutamate 5-O-methyl ester + H2O = L-glutamyl-[protein] + methanol + H(+). It catalyses the reaction L-glutaminyl-[protein] + H2O = L-glutamyl-[protein] + NH4(+). In terms of biological role, involved in chemotaxis. Part of a chemotaxis signal transduction system that modulates chemotaxis in response to various stimuli. Catalyzes the demethylation of specific methylglutamate residues introduced into the chemoreceptors (methyl-accepting chemotaxis proteins or MCP) by CheR. Also mediates the irreversible deamidation of specific glutamine residues to glutamic acid. The sequence is that of Protein-glutamate methylesterase/protein-glutamine glutaminase from Treponema pallidum (strain Nichols).